The primary structure comprises 195 residues: Pyruvoyl-dependent arginine decarboxylase AaxB (195 aa).

Ser53 is subject to Pyruvic acid (Ser).

This sequence belongs to the pyruvoyl-dependent arginine decarboxylase family. Trimer of an alpha-beta dimer. Requires pyruvate as cofactor.

Its subcellular location is the cytoplasm. It catalyses the reaction L-arginine + H(+) = agmatine + CO2. Its function is as follows. Part of the AaxABC system, catalyzes the decarboxylation of L-arginine. The arginine uptake by the bacterium in the macrophage may be a virulence factor against the host innate immune response. The sequence is that of Pyruvoyl-dependent arginine decarboxylase AaxB (aaxB) from Chlamydia abortus (strain DSM 27085 / S26/3) (Chlamydophila abortus).